The primary structure comprises 424 residues: UPF0229 protein YPTS_2141 (424 aa).

The interval 84-109 (TNDRVDRPQGGGGGGSGQGNAGKDGE) is disordered. Residues 92–105 (QGGGGGGSGQGNAG) show a composition bias toward gly residues.

This sequence belongs to the UPF0229 family.

In Yersinia pseudotuberculosis serotype IB (strain PB1/+), this protein is UPF0229 protein YPTS_2141.